A 188-amino-acid polypeptide reads, in one-letter code: Elongation factor P (188 aa).

Belongs to the elongation factor P family.

Its subcellular location is the cytoplasm. It participates in protein biosynthesis; polypeptide chain elongation. Involved in peptide bond synthesis. Stimulates efficient translation and peptide-bond synthesis on native or reconstituted 70S ribosomes in vitro. Probably functions indirectly by altering the affinity of the ribosome for aminoacyl-tRNA, thus increasing their reactivity as acceptors for peptidyl transferase. The polypeptide is Elongation factor P (Pseudomonas aeruginosa (strain LESB58)).